A 313-amino-acid polypeptide reads, in one-letter code: Small ribosomal subunit biogenesis GTPase RsgA (313 aa).

The region spanning 80-237 (KVALRQVIVS…LIDTPGIKEF (158 aa)) is the CP-type G domain. Residues 129–132 (NKVD) and 180–188 (GQSGVGKSS) contribute to the GTP site. Positions 261, 266, 268, and 274 each coordinate Zn(2+).

The protein belongs to the TRAFAC class YlqF/YawG GTPase family. RsgA subfamily. In terms of assembly, monomer. Associates with 30S ribosomal subunit, binds 16S rRNA. The cofactor is Zn(2+).

It is found in the cytoplasm. One of several proteins that assist in the late maturation steps of the functional core of the 30S ribosomal subunit. Helps release RbfA from mature subunits. May play a role in the assembly of ribosomal proteins into the subunit. Circularly permuted GTPase that catalyzes slow GTP hydrolysis, GTPase activity is stimulated by the 30S ribosomal subunit. The chain is Small ribosomal subunit biogenesis GTPase RsgA from Borrelia recurrentis (strain A1).